A 450-amino-acid polypeptide reads, in one-letter code: Glucose-6-phosphate isomerase (450 aa).

Thr39 bears the Phosphothreonine mark. The active-site Proton donor is the Glu291. Residues His312 and Lys426 contribute to the active site.

The protein belongs to the GPI family.

It localises to the cytoplasm. The enzyme catalyses alpha-D-glucose 6-phosphate = beta-D-fructose 6-phosphate. It participates in carbohydrate biosynthesis; gluconeogenesis. Its pathway is carbohydrate degradation; glycolysis; D-glyceraldehyde 3-phosphate and glycerone phosphate from D-glucose: step 2/4. Catalyzes the reversible isomerization of glucose-6-phosphate to fructose-6-phosphate. The sequence is that of Glucose-6-phosphate isomerase from Halalkalibacterium halodurans (strain ATCC BAA-125 / DSM 18197 / FERM 7344 / JCM 9153 / C-125) (Bacillus halodurans).